The primary structure comprises 118 residues: Large ribosomal subunit protein bL20 (118 aa).

The protein belongs to the bacterial ribosomal protein bL20 family.

Functionally, binds directly to 23S ribosomal RNA and is necessary for the in vitro assembly process of the 50S ribosomal subunit. It is not involved in the protein synthesizing functions of that subunit. The polypeptide is Large ribosomal subunit protein bL20 (Campylobacter concisus (strain 13826)).